The sequence spans 239 residues: Ribonuclease 3 (239 aa).

An RNase III domain is found at 12 to 137; that stretch reads RAKLESLIGH…LIAAIYLDGG (126 aa). Glutamate 50 is a binding site for Mg(2+). Aspartate 54 is an active-site residue. Positions 123 and 126 each coordinate Mg(2+). The active site involves glutamate 126. The DRBM domain occupies 162–231; sequence DAKTELQEWS…ATKMLEREGI (70 aa).

It belongs to the ribonuclease III family. In terms of assembly, homodimer. Requires Mg(2+) as cofactor.

It localises to the cytoplasm. The enzyme catalyses Endonucleolytic cleavage to 5'-phosphomonoester.. Its function is as follows. Digests double-stranded RNA. Involved in the processing of primary rRNA transcript to yield the immediate precursors to the large and small rRNAs (23S and 16S). Processes some mRNAs, and tRNAs when they are encoded in the rRNA operon. Processes pre-crRNA and tracrRNA of type II CRISPR loci if present in the organism. This chain is Ribonuclease 3, found in Rhizobium etli (strain CIAT 652).